Consider the following 305-residue polypeptide: MYNGILPVYKERGLTSHDVVFKLRKILKTKKIGHTGTLDPEVAGVLPVCIGNATRVSDYVMDMGKAYEATVSIGRSTTTEDQTGDTLEMKGVHSANFNNDDIDRLLESFKGIIEQIPPMYSSVKVNGKKLYEYARNNETVERPKRKVNIKDIGRISELDFKENECHFKIRVICGKGTYIRTLATDIGVKLGFPAHMSKLTRIESGGFVLKDSLTLEQIKELHEQDSLQNKLFPLEYGLKGLPSIKIKDSHIKKRILNGQKFNKNEFDNKIKDQIVFIDDDSEKVLAIYMVHPTKESEIKPKKVFN.

Asp39 (nucleophile) is an active-site residue.

The protein belongs to the pseudouridine synthase TruB family. Type 1 subfamily.

The enzyme catalyses uridine(55) in tRNA = pseudouridine(55) in tRNA. Its function is as follows. Responsible for synthesis of pseudouridine from uracil-55 in the psi GC loop of transfer RNAs. This chain is tRNA pseudouridine synthase B, found in Staphylococcus aureus (strain MRSA252).